A 343-amino-acid polypeptide reads, in one-letter code: Aldehyde reductase 2 (343 aa).

Tyrosine 177 contacts NADP(+).

Belongs to the NAD(P)-dependent epimerase/dehydratase family. Dihydroflavonol-4-reductase subfamily. Monomer.

The catalysed reaction is a primary alcohol + NADP(+) = an aldehyde + NADPH + H(+). Its activity is regulated as follows. Inhibited by quercetin and diphenylhydantoin. Catalyzes the asymmetric reduction of o-substituted aliphatic and aromatic aldehydes and ketones to an S-enantiomer. Reduces ethyl 4-chloro-3-oxobutanoate to ethyl (S)-4-chloro-3-hydroxybutanoate. In Sporidiobolus salmonicolor (Yeast-like fungus), this protein is Aldehyde reductase 2.